A 207-amino-acid polypeptide reads, in one-letter code: MTSVNLYKQDGSQNGTVELNDAVFGVEPNENVVFDAILRQRASLRQGTHAVKNRSAVSGGGKKPWRQKGTGRARQGSIRSPQFRGGGIVFGPTPRSYKYSLPRKVRQLAIKSALSQKVLDNSFVVVDALNFDAPKTKEFADVMGNLNVAEKTLVVVTDDDKNAALSARNLANATVVTPAGVNILNVVDNQKIVITKSALSQVEEVLA.

The disordered stretch occupies residues Thr48–Gly87.

Belongs to the universal ribosomal protein uL4 family. In terms of assembly, part of the 50S ribosomal subunit.

One of the primary rRNA binding proteins, this protein initially binds near the 5'-end of the 23S rRNA. It is important during the early stages of 50S assembly. It makes multiple contacts with different domains of the 23S rRNA in the assembled 50S subunit and ribosome. Its function is as follows. Forms part of the polypeptide exit tunnel. The sequence is that of Large ribosomal subunit protein uL4 from Limosilactobacillus reuteri subsp. reuteri (strain JCM 1112) (Lactobacillus reuteri).